The primary structure comprises 278 residues: Octanoyl-[GcvH]:protein N-octanoyltransferase (278 aa).

Positions 41-247 constitute a BPL/LPL catalytic domain; it reads LVSPPTIRTW…LLHRLAGEVH (207 aa). C146 serves as the catalytic Acyl-thioester intermediate.

This sequence belongs to the octanoyltransferase LipL family.

The catalysed reaction is N(6)-octanoyl-L-lysyl-[glycine-cleavage complex H protein] + L-lysyl-[lipoyl-carrier protein] = N(6)-octanoyl-L-lysyl-[lipoyl-carrier protein] + L-lysyl-[glycine-cleavage complex H protein]. It participates in protein modification; protein lipoylation via endogenous pathway; protein N(6)-(lipoyl)lysine from octanoyl-[acyl-carrier-protein]. Functionally, catalyzes the amidotransfer (transamidation) of the octanoyl moiety from octanoyl-GcvH to the lipoyl domain of the E2 subunit of lipoate-dependent enzymes. This is Octanoyl-[GcvH]:protein N-octanoyltransferase from Lysinibacillus sphaericus (strain C3-41).